A 284-amino-acid chain; its full sequence is tRNA-splicing endonuclease (284 aa).

Residues Tyr-222, His-229, and Lys-257 contribute to the active site.

This sequence belongs to the tRNA-intron endonuclease family. Archaeal long subfamily. As to quaternary structure, homodimer.

The catalysed reaction is pretRNA = a 3'-half-tRNA molecule with a 5'-OH end + a 5'-half-tRNA molecule with a 2',3'-cyclic phosphate end + an intron with a 2',3'-cyclic phosphate and a 5'-hydroxyl terminus.. Its function is as follows. Endonuclease that removes tRNA introns. Cleaves pre-tRNA at the 5'- and 3'-splice sites to release the intron. The products are an intron and two tRNA half-molecules bearing 2',3' cyclic phosphate and 5'-OH termini. Recognizes a pseudosymmetric substrate in which 2 bulged loops of 3 bases are separated by a stem of 4 bp. The protein is tRNA-splicing endonuclease of Picrophilus torridus (strain ATCC 700027 / DSM 9790 / JCM 10055 / NBRC 100828 / KAW 2/3).